Here is a 328-residue protein sequence, read N- to C-terminus: Arabinose 5-phosphate isomerase KdsD (328 aa).

The SIS domain maps to 41 to 184; sequence ACEKMFNCTG…AVALLKARGF (144 aa). Residues 75–76, H82, H88, 114–123, and 148–150 each bind substrate; these read GT, ALIPVLKRLH, and KVP. H82 is a Zn(2+) binding site. In terms of domain architecture, CBS 1 spans 210-268; sequence MHTGDEIPHVNKHATLRDALLEITRKNLGMTVICDESMKIDGIFTDGDLRRMFDMGGDM. E275 is a substrate binding site. Positions 277–328 constitute a CBS 2 domain; sequence MTPGGIRVRPGILAVDALNLMQSRHITSVLVADGDQLLGVLHMHDLLRAGVV.

This sequence belongs to the SIS family. GutQ/KpsF subfamily. Homotetramer.

It carries out the reaction D-arabinose 5-phosphate = D-ribulose 5-phosphate. It functions in the pathway carbohydrate biosynthesis; 3-deoxy-D-manno-octulosonate biosynthesis; 3-deoxy-D-manno-octulosonate from D-ribulose 5-phosphate: step 1/3. The protein operates within bacterial outer membrane biogenesis; lipopolysaccharide biosynthesis. Functionally, involved in the biosynthesis of 3-deoxy-D-manno-octulosonate (KDO), a unique 8-carbon sugar component of lipopolysaccharides (LPSs). Catalyzes the reversible aldol-ketol isomerization between D-ribulose 5-phosphate (Ru5P) and D-arabinose 5-phosphate (A5P). The sequence is that of Arabinose 5-phosphate isomerase KdsD (kdsD) from Salmonella typhi.